We begin with the raw amino-acid sequence, 352 residues long: MELLNATLAKIYGLDKEAMVKAQAHQDILIKPQGSLGKLEAIVVQLAGIQGDAKPKTAKKAIITMAGDHGIIDEKFHNWPKEVTVQMLQNFAHGGAAINVLSRQVGARNVVVALGVATPMAADPNIINRNIAPGTNNMVHGPAMTREQAVKAIEVGIEIVNAEVKKGLDLVGTGDMGIGNTSPSAAICSVITGRSLEDVTGRGTGASDEQMKLKRNAIAKAISLNNPDAKDAIDVLSKVGGYEIGGLAGVILGAAANRVAVVVDGFISGAAALIAYTICPQVKDFMFAAHQSVEPGHRILLEHMGLDAILKMDMRLGEGTGAALAMNIIEAANRIQHEMASFADAGVSEKQS.

Glutamate 318 (proton acceptor) is an active-site residue.

The protein belongs to the CobT family.

It catalyses the reaction 5,6-dimethylbenzimidazole + nicotinate beta-D-ribonucleotide = alpha-ribazole 5'-phosphate + nicotinate + H(+). Its pathway is nucleoside biosynthesis; alpha-ribazole biosynthesis; alpha-ribazole from 5,6-dimethylbenzimidazole: step 1/2. Catalyzes the synthesis of alpha-ribazole-5'-phosphate from nicotinate mononucleotide (NAMN) and 5,6-dimethylbenzimidazole (DMB). In Dehalococcoides mccartyi (strain ATCC BAA-2100 / JCM 16839 / KCTC 5957 / BAV1), this protein is Nicotinate-nucleotide--dimethylbenzimidazole phosphoribosyltransferase.